Consider the following 142-residue polypeptide: Large ribosomal subunit protein uL13 (142 aa).

Belongs to the universal ribosomal protein uL13 family. Part of the 50S ribosomal subunit.

Functionally, this protein is one of the early assembly proteins of the 50S ribosomal subunit, although it is not seen to bind rRNA by itself. It is important during the early stages of 50S assembly. The protein is Large ribosomal subunit protein uL13 of Buchnera aphidicola subsp. Cinara cedri (strain Cc).